A 491-amino-acid chain; its full sequence is Ketol-acid reductoisomerase (NADP(+)) (491 aa).

The 194-residue stretch at 15–208 (AQLGKCRFMG…GGHRAGVLES (194 aa)) folds into the KARI N-terminal Rossmann domain. NADP(+) is bound by residues 45 to 48 (CGAQ), R68, R76, S78, and 108 to 110 (DKQ). H132 is an active-site residue. An NADP(+)-binding site is contributed by G158. KARI C-terminal knotted domains lie at 209-344 (SFVA…TAPQ) and 345-484 (FEGK…MTDM). Mg(2+)-binding residues include D217, E221, E389, and E393. Residue S414 coordinates substrate.

It belongs to the ketol-acid reductoisomerase family. The cofactor is Mg(2+).

It catalyses the reaction (2R)-2,3-dihydroxy-3-methylbutanoate + NADP(+) = (2S)-2-acetolactate + NADPH + H(+). The enzyme catalyses (2R,3R)-2,3-dihydroxy-3-methylpentanoate + NADP(+) = (S)-2-ethyl-2-hydroxy-3-oxobutanoate + NADPH + H(+). It functions in the pathway amino-acid biosynthesis; L-isoleucine biosynthesis; L-isoleucine from 2-oxobutanoate: step 2/4. It participates in amino-acid biosynthesis; L-valine biosynthesis; L-valine from pyruvate: step 2/4. Functionally, involved in the biosynthesis of branched-chain amino acids (BCAA). Catalyzes an alkyl-migration followed by a ketol-acid reduction of (S)-2-acetolactate (S2AL) to yield (R)-2,3-dihydroxy-isovalerate. In the isomerase reaction, S2AL is rearranged via a Mg-dependent methyl migration to produce 3-hydroxy-3-methyl-2-ketobutyrate (HMKB). In the reductase reaction, this 2-ketoacid undergoes a metal-dependent reduction by NADPH to yield (R)-2,3-dihydroxy-isovalerate. The protein is Ketol-acid reductoisomerase (NADP(+)) of Salmonella agona (strain SL483).